Reading from the N-terminus, the 52-residue chain is Transcriptional regulator SlrA (52 aa).

One can recognise a Sin domain in the interval methionine 1–threonine 38.

In terms of assembly, component of the SlrR/SlrA complex.

Functionally, required specifically for induction of eps and yqxM operons by antagonizing SinR. Regulates SlrR activity. Controls the initiation of biofilm formation. The chain is Transcriptional regulator SlrA (slrA) from Bacillus subtilis (strain 168).